The chain runs to 354 residues: MVNIVAVRRHGVHVRVIHVPPVQPQPILAPLTPAAIFLVLTVDDGGEATVHEALQDISGLVRAIGFREPQKRLSAIASIGSDVWDRLFSGPRPAELHRFVELHGPRHTAPATPGDLLFHIRAESLDVCFELADRILKSMAGAVTVVDEVHGFRYFDNRDLLGFVDGTENPDGALAVSSTAIGDEDPDFAGSCYVHVQKYLHDMSAWTALSVTEQENVIGRTKLDDIELDDDVKPADAHIALNVITDDDGTELKIVRHNMPFGELGKSEYGTYFIGYSRTPRVTEQMLRNMFLGDPPGNTDRILDFSTAVTGGLFFSPTVDFLDDPPPLPAPGTPAAPPARNGSLSIGSLKGTTR.

The active-site Proton acceptor is the Asp165. A heme-binding site is contributed by His238. The interval 312–335 (GLFFSPTVDFLDDPPPLPAPGTPA) is targeting peptide. Positions 324-337 (DPPPLPAPGTPAAP) are enriched in pro residues. Positions 324-354 (DPPPLPAPGTPAAPPARNGSLSIGSLKGTTR) are disordered. Over residues 342 to 354 (GSLSIGSLKGTTR) the composition is skewed to polar residues.

Belongs to the DyP-type peroxidase family. In terms of assembly, found in a complex with type 1 encapsulin, strongly suggesting it is found in a type 1 encapsulin nanocompartment. Homotetramer, presumably also in the type 1 encapsulin nanocompartment. Heme b serves as cofactor.

The protein localises to the encapsulin nanocompartment. Its subcellular location is the cell membrane. The enzyme catalyses 2 a phenolic donor + H2O2 = 2 a phenolic radical donor + 2 H2O. Functionally, cargo protein of a type 1 encapsulin nanocompartment. A heme-dependent peroxidase. This cargo-loaded encapsulin nanocompartment is probably involved in protection against oxidative damage. This Mycolicibacterium paratuberculosis (strain ATCC BAA-968 / K-10) (Mycobacterium paratuberculosis) protein is Dye-decolorizing peroxidase.